The following is a 316-amino-acid chain: Iron-sulfur cluster assembly SufBD family protein MJ0034 (316 aa).

It belongs to the iron-sulfur cluster assembly SufBD family.

This Methanocaldococcus jannaschii (strain ATCC 43067 / DSM 2661 / JAL-1 / JCM 10045 / NBRC 100440) (Methanococcus jannaschii) protein is Iron-sulfur cluster assembly SufBD family protein MJ0034.